Consider the following 583-residue polypeptide: Aspartate--tRNA ligase (583 aa).

Residue E174 coordinates L-aspartate. The segment at 198-201 is aspartate; it reads QITK. Residue R220 participates in L-aspartate binding. ATP-binding positions include 220–222 and Q229; that span reads RDE. L-aspartate is bound at residue H443. E477 contacts ATP. R484 contacts L-aspartate. ATP is bound at residue 529-532; sequence GLDR.

Belongs to the class-II aminoacyl-tRNA synthetase family. Type 1 subfamily. In terms of assembly, homodimer.

It is found in the cytoplasm. The enzyme catalyses tRNA(Asp) + L-aspartate + ATP = L-aspartyl-tRNA(Asp) + AMP + diphosphate. Catalyzes the attachment of L-aspartate to tRNA(Asp) in a two-step reaction: L-aspartate is first activated by ATP to form Asp-AMP and then transferred to the acceptor end of tRNA(Asp). The protein is Aspartate--tRNA ligase of Streptococcus agalactiae serotype V (strain ATCC BAA-611 / 2603 V/R).